Reading from the N-terminus, the 92-residue chain is Small ribosomal subunit protein uS19 (92 aa).

It belongs to the universal ribosomal protein uS19 family.

Its function is as follows. Protein S19 forms a complex with S13 that binds strongly to the 16S ribosomal RNA. The protein is Small ribosomal subunit protein uS19 of Staphylococcus carnosus (strain TM300).